Here is a 497-residue protein sequence, read N- to C-terminus: Putative endothelial lipase (497 aa).

Positions 1–23 are cleaved as a signal peptide; the sequence is MRACPFLLLLLLPLLLSLGRIAA. Cysteine 73 and cysteine 86 are joined by a disulfide. Residues asparagine 89 and asparagine 145 are each glycosylated (N-linked (GlcNAc...) asparagine). Serine 178 (nucleophile) is an active-site residue. The active-site Charge relay system is the aspartate 202. The cysteines at positions 262 and 282 are disulfide-linked. Histidine 284 functions as the Charge relay system in the catalytic mechanism. 2 disulfide bridges follow: cysteine 307–cysteine 326 and cysteine 318–cysteine 321. 335-347 contacts heparin; it reads KMRNKRNSKMYLK. The PLAT domain maps to 357-492; sequence FHYQLKIHVF…CLKMVKVEKH (136 aa). The N-linked (GlcNAc...) asparagine glycan is linked to asparagine 403.

This sequence belongs to the AB hydrolase superfamily. Lipase family. Head to tail homodimer. In terms of tissue distribution, expressed by the venom gland.

Its subcellular location is the secreted. The enzyme catalyses a triacylglycerol + H2O = a diacylglycerol + a fatty acid + H(+). Inhibited by serum. Functionally, has phospholipase and triglyceride lipase activities. In Crotalus adamanteus (Eastern diamondback rattlesnake), this protein is Putative endothelial lipase.